Here is a 1127-residue protein sequence, read N- to C-terminus: Inactive phospholipase C-like protein 2 (1127 aa).

The segment covering 1 to 11 (MAECGRGGAAG) has biased composition (gly residues). The interval 1–128 (MAECGRGGAA…KKTVSFSSMP (128 aa)) is disordered. A2 carries the N-acetylalanine modification. Phosphoserine is present on S17. Residues 19-31 (GPALGAKGALKAG) are compositionally biased toward low complexity. Positions 32–42 (VGEGGGGGGRL) are enriched in gly residues. Phosphothreonine is present on T84. The PH domain occupies 141-251 (NSMVEGSELK…WVTGLRYLIS (111 aa)). The PI-PLC X-box domain maps to 426 to 570 (QDMKQPLSHY…LKGKILIKAK (145 aa)). T584 is subject to Phosphothreonine. Residues 618–734 (LSELVSICKS…GYVLRPAIMR (117 aa)) form the PI-PLC Y-box domain. The region spanning 734–863 (REEVSFFSAN…TGYRHVPLQS (130 aa)) is the C2 domain. Positions 1101–1127 (GTENADVQKPRRSLEVIPEKANDETGE) are disordered. Over residues 1106-1127 (DVQKPRRSLEVIPEKANDETGE) the composition is skewed to basic and acidic residues. S1113 is modified (phosphoserine).

The protein resides in the cytoplasm. Its function is as follows. May play an role in the regulation of Ins(1,4,5)P3 around the endoplasmic reticulum. The protein is Inactive phospholipase C-like protein 2 (PLCL2) of Homo sapiens (Human).